The chain runs to 375 residues: Stimulator of interferon genes protein 2 (375 aa).

The next 4 membrane-spanning stretches (helical) occupy residues 30–50 (TATV…LLAV), 60–80 (IHFL…GELV), 114–134 (AGSI…VLYE), and 144–164 (YPIL…LVGL). Residues Tyr195, Arg256, and Arg262 each coordinate 2',3'-cGAMP.

It belongs to the STING family.

It is found in the membrane. In terms of biological role, facilitator of innate immune signaling that acts as a sensor of second messenger signals produced by cyclic GMP-AMP synthase-like receptors (cGLRs) and promotes the production of type I interferon. Innate immune response is triggered in response to nucleotides from viruses and bacteria delivered to the cytoplasm. Acts by binding cyclic dinucleotides: recognizes and binds 2'-3' linked cGAMP (2'-3'-cGAMP), a second messengers produced by cGLRs in response to nucleotides in the cytosol, such as double-stranded RNA (dsRNA). Upon binding to 2'-3'-cGAMP, oligomerizes and promotes the recruitment and subsequent activation of the transcription factor IRF3 to induce expression of type I interferon. The chain is Stimulator of interferon genes protein 2 from Stylophora pistillata (Smooth cauliflower coral).